The following is a 396-amino-acid chain: N-acyl-phosphatidylethanolamine-hydrolyzing phospholipase D (396 aa).

Met1 is modified (N-acetylmethionine). Composition is skewed to polar residues over residues 1–12 and 26–37; these read MDENENSQSPAP and NSVQNSGGSESS. The segment at 1 to 41 is disordered; sequence MDENENSQSPAPSHQYPKETLRKRQNSVQNSGGSESSRLSR. The Zn(2+) site is built by His185 and His187. Position 188 (Tyr188) interacts with an N-acyl-1,2-diacyl-sn-glycero-3-phosphoethanolamine. 3 residues coordinate Zn(2+): Asp189, His190, and His253. Lys256 serves as a coordination point for deoxycholate. Asp284 provides a ligand contact to Zn(2+). His321 provides a ligand contact to an N-acyl-1,2-diacyl-sn-glycero-3-phosphoethanolamine. Zn(2+) is bound at residue His343. Ala348 lines the deoxycholate pocket.

This sequence belongs to the NAPE-PLD family. In terms of assembly, homodimer. Bile acids promote the assembly of inactive monomers into an active dimer and enable catalysis. Requires Zn(2+) as cofactor. As to expression, widely expressed. Highest expression in brain, kidney and testis (at protein level). Expressed in adipose tissue (at protein level).

It localises to the golgi apparatus membrane. The protein resides in the early endosome membrane. It is found in the nucleus envelope. The protein localises to the nucleus. Its subcellular location is the nucleoplasm. The enzyme catalyses an N-acyl-1,2-diacyl-sn-glycero-3-phosphoethanolamine + H2O = an N-acylethanolamine + a 1,2-diacyl-sn-glycero-3-phosphate + H(+). It catalyses the reaction N-butanoyl-1-hexadecanoyl-2-(9Z,12Z-octadecadienoyl)-sn-glycero-3-phosphoethanolamine + H2O = N-butanoyl ethanolamine + 1-hexadecanoyl-2-(9Z,12Z-octadecadienoyl)-sn-glycero-3-phosphate + H(+). It carries out the reaction N-hexanoyl-1-hexadecanoyl-2-(9Z,12Z-octadecadienoyl)-sn-glycero-3-phosphoethanolamine + H2O = N-hexanoyl ethanolamine + 1-hexadecanoyl-2-(9Z,12Z-octadecadienoyl)-sn-glycero-3-phosphate + H(+). The catalysed reaction is N-octanoyl-1-hexadecanoyl-2-(9Z,12Z-octadecadienoyl)-sn-glycero-3-phosphoethanolamine + H2O = N-octanoyl ethanolamine + 1-hexadecanoyl-2-(9Z,12Z-octadecadienoyl)-sn-glycero-3-phosphate + H(+). The enzyme catalyses N-decanoyl-1-hexadecanoyl-2-(9Z,12Z-octadecadienoyl)-sn-glycero-3-phosphoethanolamine + H2O = N-decanoyl ethanolamine + 1-hexadecanoyl-2-(9Z,12Z-octadecadienoyl)-sn-glycero-3-phosphate + H(+). It catalyses the reaction N-dodecanoyl-1,2-di-(9Z-octadecenoyl)-sn-glycero-3-phosphoethanolamine + H2O = N-dodecanoylethanolamine + 1,2-di-(9Z-octadecenoyl)-sn-glycero-3-phosphate + H(+). It carries out the reaction N-tetradecanoyl-1,2-di-(9Z-octadecenoyl)-sn-glycero-3-phosphoethanolamine + H2O = N-tetradecanoylethanolamine + 1,2-di-(9Z-octadecenoyl)-sn-glycero-3-phosphate + H(+). The catalysed reaction is N-hexadecanoyl-1,2-di-(9Z-octadecenoyl)-sn-glycero-3-phosphoethanolamine + H2O = N-hexadecanoylethanolamine + 1,2-di-(9Z-octadecenoyl)-sn-glycero-3-phosphate + H(+). The enzyme catalyses N,1-dihexadecanoyl-2-(9Z,12Z-octadecadienoyl)-sn-glycero-3-phosphoethanolamine + H2O = 1-hexadecanoyl-2-(9Z,12Z-octadecadienoyl)-sn-glycero-3-phosphate + N-hexadecanoylethanolamine + H(+). It catalyses the reaction N-octadecanoyl-1,2-di-(9Z-octadecenoyl)-sn-glycero-3-phosphoethanolamine + H2O = N-octadecanoyl ethanolamine + 1,2-di-(9Z-octadecenoyl)-sn-glycero-3-phosphate + H(+). It carries out the reaction N,1,2-tri-(9Z-octadecenoyl)-sn-glycero-3-phosphoethanolamine + H2O = N-(9Z-octadecenoyl) ethanolamine + 1,2-di-(9Z-octadecenoyl)-sn-glycero-3-phosphate + H(+). The catalysed reaction is N-(5Z,8Z,11Z,14Z-eicosatetraenoyl)-1,2-diacyl-sn-glycero-3-phosphoethanolamine + H2O = N-(5Z,8Z,11Z,14Z-eicosatetraenoyl)-ethanolamine + a 1,2-diacyl-sn-glycero-3-phosphate + H(+). The enzyme catalyses N-(5Z,8Z,11Z,14Z-eicosatetraenoyl)-1,2-di-(9Z-octadecenoyl)-sn-glycero-3-phosphoethanolamine + H2O = N-(5Z,8Z,11Z,14Z-eicosatetraenoyl)-ethanolamine + 1,2-di-(9Z-octadecenoyl)-sn-glycero-3-phosphate + H(+). It catalyses the reaction 1-O-(1Z-octadecenoyl)-2-(9Z-octadecenoyl)-sn-glycero-3-phospho-N-hexadecanoyl-ethanolamine + H2O = 1-O-(1Z-octadecenoyl)-2-(9Z-octadecenoyl)-sn-glycero-3-phosphate + N-hexadecanoylethanolamine + H(+). It carries out the reaction N,1-diacyl-sn-glycero-3-phosphoethanolamine + H2O = an N-acylethanolamine + a 1-acyl-sn-glycero-3-phosphate + H(+). The catalysed reaction is N,1-dihexadecanoyl-sn-glycero-3-phosphoethanolamine + H2O = N-hexadecanoylethanolamine + 1-hexadecanoyl-sn-glycero-3-phosphate + H(+). The enzyme catalyses N-(5Z,8Z,11Z,14Z-eicosatetraenoyl)-1-(9Z-octadecenoyl)-sn-glycero-3-phosphoethanolamine + H2O = N-(5Z,8Z,11Z,14Z-eicosatetraenoyl)-ethanolamine + 1-(9Z-octadecenoyl)-sn-glycero-3-phosphate + H(+). Activated by divalent cations. Activated by bile acids. Activated by membrane phospholipids such as phosphatidylethanolamines. Inhibited by cardiolipins. Its function is as follows. D-type phospholipase that hydrolyzes N-acyl-phosphatidylethanolamines (NAPEs) to produce bioactive N-acylethanolamines/fatty acid ethanolamides (NAEs/FAEs) and phosphatidic acid. Cleaves the terminal phosphodiester bond of diacyl- and alkenylacyl-NAPEs, primarily playing a role in the generation of long-chain saturated and monounsaturated NAEs in the brain. May control NAPE homeostasis in dopaminergic neuron membranes and regulate neuron survival, partly through RAC1 activation. As a regulator of lipid metabolism in the adipose tissue, mediates the crosstalk between adipocytes, gut microbiota and immune cells to control body temperature and weight. In particular, regulates energy homeostasis by promoting cold-induced brown or beige adipocyte differentiation program to generate heat from fatty acids and glucose. Has limited D-type phospholipase activity toward N-acyl lyso-NAPEs. In Rattus norvegicus (Rat), this protein is N-acyl-phosphatidylethanolamine-hydrolyzing phospholipase D (Napepld).